Reading from the N-terminus, the 64-residue chain is Conotoxin Im11.2 (64 aa).

An N-terminal signal peptide occupies residues 1-26 (MMFRLTSVSCFLLVIVCLNLVVLTNA). 4 disulfide bridges follow: cysteine 27-cysteine 41, cysteine 34-cysteine 46, cysteine 40-cysteine 50, and cysteine 45-cysteine 54. The residue at position 57 (aspartate 57) is an Aspartic acid 1-amide. A propeptide spanning residues 61–64 (ATFQ) is cleaved from the precursor.

It belongs to the conotoxin I2 superfamily. In terms of tissue distribution, expressed by the venom duct.

The protein localises to the secreted. This chain is Conotoxin Im11.2, found in Conus imperialis (Imperial cone).